Here is a 462-residue protein sequence, read N- to C-terminus: MFIINKNLPHFKNDFSDYYSKLDNDLSISSPKFESPVLSQPKVKPLSHDIISICSTKITPLDDFNFLKVISKGGFGKVYLAENKITKKTVAIKVIKKSDTIKKMMVDQVNIEKTILSNYKCNFIVELFSSFQTDKKLFFVMEFLNGGDCASLLRSFNNNMPEDLTKNIIAQIIICLEYLHNHGIIHRDLKPDNILIDSNGHIKLADFGLSKFDFVDESCNIKILKNSFTLYNTNNNNTTENQKILGTPYYIPPEVILGKGYGKTIDWWSLGIILYEFLIGYPPFQEDEPNESINPKSDNDEKNVRIIFNKITNHKKKLYFPKKLYPVAIDLIEKLLDPNPSVRLGANGVDEVKCHPFFSEINWKIYEDQKVLVFQPFVENDCDTSYFIERKEENNKNKINDDIDSLILNQNNQNIYKNNNNNNNNNNNNNNNNNNNNNNDDNDDENNIIDQNLFIDFDFPTY.

Positions F64–F358 constitute a Protein kinase domain. ATP is bound by residues I70 to V78 and K93. Catalysis depends on D188, which acts as the Proton acceptor. Positions S359–Y462 constitute an AGC-kinase C-terminal domain. Residues N414–N439 show a composition bias toward low complexity. The segment at N414 to N447 is disordered.

The protein belongs to the protein kinase superfamily. AGC Ser/Thr protein kinase family.

It carries out the reaction L-seryl-[protein] + ATP = O-phospho-L-seryl-[protein] + ADP + H(+). The catalysed reaction is L-threonyl-[protein] + ATP = O-phospho-L-threonyl-[protein] + ADP + H(+). This Dictyostelium discoideum (Social amoeba) protein is Probable serine/threonine-protein kinase DDB_G0286841.